The sequence spans 284 residues: 3-methyl-2-oxobutanoate hydroxymethyltransferase 2 (284 aa).

Residues aspartate 49 and aspartate 88 each coordinate Mg(2+). Residues 49-50 (DS), aspartate 88, and lysine 118 contribute to the 3-methyl-2-oxobutanoate site. Glutamate 120 contributes to the Mg(2+) binding site. Residue glutamate 187 is the Proton acceptor of the active site.

The protein belongs to the PanB family. As to quaternary structure, homodecamer; pentamer of dimers. Mg(2+) is required as a cofactor.

The protein localises to the cytoplasm. It catalyses the reaction 3-methyl-2-oxobutanoate + (6R)-5,10-methylene-5,6,7,8-tetrahydrofolate + H2O = 2-dehydropantoate + (6S)-5,6,7,8-tetrahydrofolate. Its pathway is cofactor biosynthesis; (R)-pantothenate biosynthesis; (R)-pantoate from 3-methyl-2-oxobutanoate: step 1/2. Functionally, catalyzes the reversible reaction in which hydroxymethyl group from 5,10-methylenetetrahydrofolate is transferred onto alpha-ketoisovalerate to form ketopantoate. This Burkholderia cenocepacia (strain HI2424) protein is 3-methyl-2-oxobutanoate hydroxymethyltransferase 2.